The sequence spans 206 residues: Recombination protein RecR (206 aa).

The segment at 60 to 75 (CAMCNTFCEGGLCDIC) adopts a C4-type zinc-finger fold. Residues 83-178 (RRLMVVHMPA…KVSRLSQGIP (96 aa)) form the Toprim domain.

Belongs to the RecR family.

May play a role in DNA repair. It seems to be involved in an RecBC-independent recombinational process of DNA repair. It may act with RecF and RecO. The sequence is that of Recombination protein RecR from Neisseria meningitidis serogroup B (strain ATCC BAA-335 / MC58).